Reading from the N-terminus, the 784-residue chain is MASLDDPGEVREGFLCPLCLKDLQSFYQLHSHYEEEHSGEDRDVKGQIKSLVQKAKKAKDRLLKREGDDRAESGTQGYESFSYGGVDPYMWEPQELGAVRSHLSDFKKHRAARIDHYVVEVNKLIIRLEKLTAFDRTNTESAKIRAIEKSVVPWVNDQDVPFCPDCGNKFSIRNRRHHCRLCGSIMCKKCMELISLPLANKLTSASKESLSTHTSPSQSPNSVHGSRRGSISSMSSVSSVLDEKDDDRIRCCTHCKDTLLKREQQIDEKEHTPDIVKLYEKLRLCMEKVDQKAPEYIRMAASLNAGETTYSLEHASDLRVEVQKVYELIDALSKKILTLGLNQDPPPHPSNLRLQRMIRYSATLFVQEKLLGLMSLPTKEQFEELKKKRKEEMERKRAVERQAALESQRRLEERQSGLASRAANGEVASLRRGPAPLRKAEGWLPLSGGQGQSEDSDPLLQQIHNITSFIRQAKAAGRMDEVRTLQENLRQLQDEYDQQQTEKAIELSRRQAEEEDLQREQLQMLRERELEREREQFRVASLHTRTRSLDFREIGPFQLEPSREPRTHLAYALDLGSSPVPSSTAPKTPSLSSTQPTRVWSGPPAVGQERLPQSSMPQQHEGPSLNPFDEEDLSSPMEEATTGPPAAGVSLDPSARILKEYNPFEEEDEEEEAVAGNPFIQPDSPAPNPFSEEDEHPQQRLSSPLVPGNPFEEPTCINPFEMDSDSGPEAEEPIEEELLLQQIDNIKAYIFDAKQCGRLDEVEVLTENLRELKHTLAKQKGGTD.

Alanine 2 is subject to N-acetylalanine. Position 3 is a phosphoserine (serine 3). Residues 14–37 (FLCPLCLKDLQSFYQLHSHYEEEH) form a C2H2-type zinc finger. The necessary for the correct targeting to endosomes stretch occupies residues 100 to 263 (RSHLSDFKKH…HCKDTLLKRE (164 aa)). The segment at 157–260 (DQDVPFCPDC…CCTHCKDTLL (104 aa)) adopts an FYVE-type zinc-finger fold. Residues cysteine 163, cysteine 166, cysteine 179, cysteine 182, cysteine 187, and cysteine 190 each coordinate Zn(2+). The span at 207 to 224 (KESLSTHTSPSQSPNSVH) shows a compositional bias: polar residues. The interval 207-241 (KESLSTHTSPSQSPNSVHGSRRGSISSMSSVSSVL) is disordered. Serine 215, serine 219, serine 226, and serine 230 each carry phosphoserine. The segment covering 228–240 (RGSISSMSSVSSV) has biased composition (low complexity). Positions 252 and 255 each coordinate Zn(2+). The necessary for interaction with RAB4A stretch occupies residues 264-500 (QQIDEKEHTP…QLQDEYDQQQ (237 aa)). Positions 264 to 784 (QQIDEKEHTP…TLAKQKGGTD (521 aa)) are necessary for interaction with EHD1. Coiled coils occupy residues 378-414 (TKEQ…LEER) and 472-531 (QAKA…RELE). The segment covering 390-400 (KEEMERKRAVE) has biased composition (basic and acidic residues). The disordered stretch occupies residues 390–429 (KEEMERKRAVERQAALESQRRLEERQSGLASRAANGEVAS). One can recognise a UIM domain in the interval 496–515 (YDQQQTEKAIELSRRQAEEE). The interval 574 to 732 (DLGSSPVPSS…DSDSGPEAEE (159 aa)) is disordered. Polar residues predominate over residues 579–598 (PVPSSTAPKTPSLSSTQPTR). The interval 627-784 (PFDEEDLSSP…TLAKQKGGTD (158 aa)) is necessary for interaction with RAB5A. Residues 663 to 673 (PFEEEDEEEEA) show a composition bias toward acidic residues. Residue serine 684 is modified to Phosphoserine. The span at 722-732 (MDSDSGPEAEE) shows a compositional bias: acidic residues.

Interacts with EHD1, RAB4A, RAB5A, RAB14, RAB22A, RAB24 and VPS45. Binds simultaneously to RAB4A and RAB5A in vitro. Interacts with RAB4A and RAB5A that has been activated by GTP binding.

It is found in the cell membrane. Its subcellular location is the early endosome membrane. In terms of biological role, rab4/Rab5 effector protein acting in early endocytic membrane fusion and membrane trafficking of recycling endosomes. Required for endosome fusion either homotypically or with clathrin coated vesicles. Plays a role in the lysosomal trafficking of CTSD/cathepsin D from the Golgi to lysosomes. Also promotes the recycling of transferrin directly from early endosomes to the plasma membrane. Binds phospholipid vesicles containing phosphatidylinositol 3-phosphate (PtdInsP3). Plays a role in the recycling of transferrin receptor to the plasma membrane. The sequence is that of Rabenosyn-5 from Homo sapiens (Human).